Reading from the N-terminus, the 394-residue chain is Elongation factor Tu 2 (394 aa).

In terms of domain architecture, tr-type G spans 10 to 204; that stretch reads KPHVNVGTIG…ALDSYIPEPE (195 aa). Residues 19-26 form a G1 region; it reads GHVDHGKT. 19-26 provides a ligand contact to GTP; it reads GHVDHGKT. Residue Thr26 coordinates Mg(2+). The tract at residues 60-64 is G2; sequence GITIN. A G3 region spans residues 81–84; the sequence is DCPG. GTP contacts are provided by residues 81–85 and 136–139; these read DCPGH and NKCD. The segment at 136–139 is G4; sequence NKCD. Residues 174–176 are G5; sequence SAL.

It belongs to the TRAFAC class translation factor GTPase superfamily. Classic translation factor GTPase family. EF-Tu/EF-1A subfamily. In terms of assembly, monomer.

It localises to the cytoplasm. It catalyses the reaction GTP + H2O = GDP + phosphate + H(+). Its function is as follows. GTP hydrolase that promotes the GTP-dependent binding of aminoacyl-tRNA to the A-site of ribosomes during protein biosynthesis. In Shewanella loihica (strain ATCC BAA-1088 / PV-4), this protein is Elongation factor Tu 2.